The primary structure comprises 508 residues: Photosystem II CP47 reaction center protein (508 aa).

Helical transmembrane passes span 21–36, 101–115, 140–156, 203–218, 237–252, and 457–472; these read SVHIMHTALVAGWAGS, IVFSGLCFLAAIWHW, GIHLFLAGVACFGFGAF, IAAGTLGILAGLFHLS, VLSSSIAAVFFAAFVV, and SFALLFFFGHIWHGAR.

It belongs to the PsbB/PsbC family. PsbB subfamily. In terms of assembly, PSII is composed of 1 copy each of membrane proteins PsbA, PsbB, PsbC, PsbD, PsbE, PsbF, PsbH, PsbI, PsbJ, PsbK, PsbL, PsbM, PsbT, PsbX, PsbY, PsbZ, Psb30/Ycf12, at least 3 peripheral proteins of the oxygen-evolving complex and a large number of cofactors. It forms dimeric complexes. It depends on Binds multiple chlorophylls. PSII binds additional chlorophylls, carotenoids and specific lipids. as a cofactor.

Its subcellular location is the plastid. The protein resides in the chloroplast thylakoid membrane. In terms of biological role, one of the components of the core complex of photosystem II (PSII). It binds chlorophyll and helps catalyze the primary light-induced photochemical processes of PSII. PSII is a light-driven water:plastoquinone oxidoreductase, using light energy to abstract electrons from H(2)O, generating O(2) and a proton gradient subsequently used for ATP formation. This Lactuca sativa (Garden lettuce) protein is Photosystem II CP47 reaction center protein.